The sequence spans 268 residues: 4-hydroxy-tetrahydrodipicolinate reductase (268 aa).

Residues 8 to 13 (GAAGRM) and Asp-35 each bind NAD(+). Arg-36 contributes to the NADP(+) binding site. Residues 99 to 101 (GTT) and 123 to 126 (AANF) contribute to the NAD(+) site. The active-site Proton donor/acceptor is the His-156. His-157 serves as a coordination point for (S)-2,3,4,5-tetrahydrodipicolinate. Residue Lys-160 is the Proton donor of the active site. Residue 166–167 (GT) participates in (S)-2,3,4,5-tetrahydrodipicolinate binding.

It belongs to the DapB family.

It is found in the cytoplasm. The catalysed reaction is (S)-2,3,4,5-tetrahydrodipicolinate + NAD(+) + H2O = (2S,4S)-4-hydroxy-2,3,4,5-tetrahydrodipicolinate + NADH + H(+). It carries out the reaction (S)-2,3,4,5-tetrahydrodipicolinate + NADP(+) + H2O = (2S,4S)-4-hydroxy-2,3,4,5-tetrahydrodipicolinate + NADPH + H(+). It participates in amino-acid biosynthesis; L-lysine biosynthesis via DAP pathway; (S)-tetrahydrodipicolinate from L-aspartate: step 4/4. Functionally, catalyzes the conversion of 4-hydroxy-tetrahydrodipicolinate (HTPA) to tetrahydrodipicolinate. This chain is 4-hydroxy-tetrahydrodipicolinate reductase, found in Pseudomonas aeruginosa (strain LESB58).